Here is a 212-residue protein sequence, read N- to C-terminus: Large ribosomal subunit protein uL3 (212 aa).

Residues 133-152 are disordered; that stretch reads RGSMGHGSKYHRRPGSLGAK.

This sequence belongs to the universal ribosomal protein uL3 family. As to quaternary structure, part of the 50S ribosomal subunit. Forms a cluster with proteins L14 and L19.

Its function is as follows. One of the primary rRNA binding proteins, it binds directly near the 3'-end of the 23S rRNA, where it nucleates assembly of the 50S subunit. This is Large ribosomal subunit protein uL3 from Syntrophomonas wolfei subsp. wolfei (strain DSM 2245B / Goettingen).